Here is a 908-residue protein sequence, read N- to C-terminus: DNA polymerase I (908 aa).

The region spanning 1-318 (MKELYLIDAL…DDINTIDTEN (318 aa)) is the 5'-3' exonuclease domain. In terms of domain architecture, 3'-5' exonuclease spans 319-531 (VKYRSITTKI…MEENGIYLDK (213 aa)). Residues 532-908 (EYLKEYGKEL…ETGKSWGEIH (377 aa)) form a polymerase region.

This sequence belongs to the DNA polymerase type-A family.

It catalyses the reaction DNA(n) + a 2'-deoxyribonucleoside 5'-triphosphate = DNA(n+1) + diphosphate. In terms of biological role, in addition to polymerase activity, this DNA polymerase exhibits 3'-5' and 5'-3' exonuclease activity. In Borreliella burgdorferi (strain ATCC 35210 / DSM 4680 / CIP 102532 / B31) (Borrelia burgdorferi), this protein is DNA polymerase I (polA).